Reading from the N-terminus, the 556-residue chain is Large cysteine-rich periplasmic protein OmcB (556 aa).

A signal peptide spans 1 to 22 (MSKLIRRVVTVLALTSMASCFA). Residues 23 to 40 (SGGIEAAVAESLITKIVA) constitute a propeptide that is removed on maturation.

As to quaternary structure, part of a disulfide cross-linked outer membrane complex (COMC) composed of the major outer membrane porin (MOMP), the small cysteine-rich protein (OmcA) and the large cysteine-rich periplasmic protein (OmcB).

The protein resides in the periplasm. Its function is as follows. In elementary bodies (EBs, the infectious stage, which is able to survive outside the host cell) provides the structural integrity of the outer envelope through disulfide cross-links with the small cysteine-rich protein and the major outer membrane porin. It has been described in publications as the Sarkosyl-insoluble COMC (Chlamydia outer membrane complex), and serves as the functional equivalent of peptidoglycan. In Chlamydia pneumoniae (Chlamydophila pneumoniae), this protein is Large cysteine-rich periplasmic protein OmcB (omcB).